The sequence spans 292 residues: Phosphatidylglycerol--prolipoprotein diacylglyceryl transferase (292 aa).

4 helical membrane passes run 18–38 (LFGA…GLLI), 67–87 (LLTW…VLFY), 105–125 (GGMS…AFCL), and 129–149 (ISIL…LFLG). Position 150 (R150) interacts with a 1,2-diacyl-sn-glycero-3-phospho-(1'-sn-glycerol). 3 helical membrane-spanning segments follow: residues 193 to 213 (QLYE…ILIW), 222 to 242 (GAVT…VEFV), and 266 to 286 (GLTM…YFML).

The protein belongs to the Lgt family.

Its subcellular location is the cell inner membrane. It carries out the reaction L-cysteinyl-[prolipoprotein] + a 1,2-diacyl-sn-glycero-3-phospho-(1'-sn-glycerol) = an S-1,2-diacyl-sn-glyceryl-L-cysteinyl-[prolipoprotein] + sn-glycerol 1-phosphate + H(+). It participates in protein modification; lipoprotein biosynthesis (diacylglyceryl transfer). Catalyzes the transfer of the diacylglyceryl group from phosphatidylglycerol to the sulfhydryl group of the N-terminal cysteine of a prolipoprotein, the first step in the formation of mature lipoproteins. The polypeptide is Phosphatidylglycerol--prolipoprotein diacylglyceryl transferase (Cereibacter sphaeroides (strain ATCC 17025 / ATH 2.4.3) (Rhodobacter sphaeroides)).